The chain runs to 148 residues: MSMIITILNGPNLNFLGKREPEIYGTETLKDIEQFCKECATRLGVRIHFYQSNYEGQLVEWIQEAIGVSAGLIINPAAYSHTSVAILDALKMFTGTKVEVHLSHIYHREAFRHHSYTSAAVDAVIAGCGGDGYWLALEYIVKRFNRNK.

Tyr24 acts as the Proton acceptor in catalysis. Substrate-binding residues include Asn75, His81, and Asp88. The Proton donor role is filled by His101. Residues 102 to 103 and Arg112 contribute to the substrate site; that span reads LS.

This sequence belongs to the type-II 3-dehydroquinase family. Homododecamer.

The enzyme catalyses 3-dehydroquinate = 3-dehydroshikimate + H2O. The protein operates within metabolic intermediate biosynthesis; chorismate biosynthesis; chorismate from D-erythrose 4-phosphate and phosphoenolpyruvate: step 3/7. Its function is as follows. Catalyzes a trans-dehydration via an enolate intermediate. This chain is 3-dehydroquinate dehydratase, found in Bartonella henselae (strain ATCC 49882 / DSM 28221 / CCUG 30454 / Houston 1) (Rochalimaea henselae).